Here is a 44-residue protein sequence, read N- to C-terminus: Cytochrome b559 subunit beta (44 aa).

The chain crosses the membrane as a helical span at residues 19-35 (WLSVHALAVPTVFFIGA). His-23 provides a ligand contact to heme.

The protein belongs to the PsbE/PsbF family. Heterodimer of an alpha subunit and a beta subunit. PSII is composed of 1 copy each of membrane proteins PsbA, PsbB, PsbC, PsbD, PsbE, PsbF, PsbH, PsbI, PsbJ, PsbK, PsbL, PsbM, PsbT, PsbX, PsbY, PsbZ, Psb30/Ycf12, peripheral proteins PsbO, CyanoQ (PsbQ), PsbU, PsbV and a large number of cofactors. It forms dimeric complexes. The cofactor is heme b.

It is found in the cellular thylakoid membrane. Its function is as follows. This b-type cytochrome is tightly associated with the reaction center of photosystem II (PSII). PSII is a light-driven water:plastoquinone oxidoreductase that uses light energy to abstract electrons from H(2)O, generating O(2) and a proton gradient subsequently used for ATP formation. It consists of a core antenna complex that captures photons, and an electron transfer chain that converts photonic excitation into a charge separation. The protein is Cytochrome b559 subunit beta of Rippkaea orientalis (strain PCC 8801 / RF-1) (Cyanothece sp. (strain PCC 8801)).